The primary structure comprises 213 residues: Orotate phosphoribosyltransferase (213 aa).

Lys-26 lines the 5-phospho-alpha-D-ribose 1-diphosphate pocket. Residue 34–35 (FF) participates in orotate binding. 5-phospho-alpha-D-ribose 1-diphosphate is bound by residues 72-73 (YK), Arg-98, Lys-99, Lys-102, His-104, and 123-131 (DDVISAGTS). Ser-127 and Arg-155 together coordinate orotate.

It belongs to the purine/pyrimidine phosphoribosyltransferase family. PyrE subfamily. In terms of assembly, homodimer. Mg(2+) serves as cofactor.

The catalysed reaction is orotidine 5'-phosphate + diphosphate = orotate + 5-phospho-alpha-D-ribose 1-diphosphate. The protein operates within pyrimidine metabolism; UMP biosynthesis via de novo pathway; UMP from orotate: step 1/2. In terms of biological role, catalyzes the transfer of a ribosyl phosphate group from 5-phosphoribose 1-diphosphate to orotate, leading to the formation of orotidine monophosphate (OMP). The polypeptide is Orotate phosphoribosyltransferase (Laribacter hongkongensis (strain HLHK9)).